A 137-amino-acid chain; its full sequence is MSRHRRPQGFNRTDRVADQIQRELSRLLQFEMKDPRVNLATIQDVTVSRDLSYAEVYFTLLGQGEEAGAEAEEVLTKASGFLRSSLAQGLNTRTTPKLRFHYDMTPERAAHLSQLIDEARAEDRELRPEDDETGNNE.

The disordered stretch occupies residues 114–137; that stretch reads QLIDEARAEDRELRPEDDETGNNE. The span at 117-127 shows a compositional bias: basic and acidic residues; that stretch reads DEARAEDRELR. Over residues 128–137 the composition is skewed to acidic residues; the sequence is PEDDETGNNE.

This sequence belongs to the RbfA family. In terms of assembly, monomer. Binds 30S ribosomal subunits, but not 50S ribosomal subunits or 70S ribosomes.

The protein resides in the cytoplasm. Functionally, one of several proteins that assist in the late maturation steps of the functional core of the 30S ribosomal subunit. Associates with free 30S ribosomal subunits (but not with 30S subunits that are part of 70S ribosomes or polysomes). Required for efficient processing of 16S rRNA. May interact with the 5'-terminal helix region of 16S rRNA. The protein is Ribosome-binding factor A of Alcanivorax borkumensis (strain ATCC 700651 / DSM 11573 / NCIMB 13689 / SK2).